Here is a 383-residue protein sequence, read N- to C-terminus: uncharacterized protein (383 aa).

2 disordered regions span residues 27–66 (ENNN…NKKP) and 242–281 (LITT…ITRR). 2 stretches are compositionally biased toward low complexity: residues 28-63 (NNNT…NNNN) and 242-275 (LITT…KSSS).

This is an uncharacterized protein from Dictyostelium discoideum (Social amoeba).